The following is a 245-amino-acid chain: Ribonuclease PH (245 aa).

Phosphate contacts are provided by residues Arg93 and 131–133 (GTR).

It belongs to the RNase PH family. In terms of assembly, homohexameric ring arranged as a trimer of dimers.

It carries out the reaction tRNA(n+1) + phosphate = tRNA(n) + a ribonucleoside 5'-diphosphate. Its function is as follows. Phosphorolytic 3'-5' exoribonuclease that plays an important role in tRNA 3'-end maturation. Removes nucleotide residues following the 3'-CCA terminus of tRNAs; can also add nucleotides to the ends of RNA molecules by using nucleoside diphosphates as substrates, but this may not be physiologically important. Probably plays a role in initiation of 16S rRNA degradation (leading to ribosome degradation) during starvation. This chain is Ribonuclease PH, found in Corynebacterium efficiens (strain DSM 44549 / YS-314 / AJ 12310 / JCM 11189 / NBRC 100395).